Here is a 193-residue protein sequence, read N- to C-terminus: 3-isopropylmalate dehydratase small subunit (193 aa).

Belongs to the LeuD family. LeuD type 1 subfamily. As to quaternary structure, heterodimer of LeuC and LeuD.

The catalysed reaction is (2R,3S)-3-isopropylmalate = (2S)-2-isopropylmalate. It participates in amino-acid biosynthesis; L-leucine biosynthesis; L-leucine from 3-methyl-2-oxobutanoate: step 2/4. In terms of biological role, catalyzes the isomerization between 2-isopropylmalate and 3-isopropylmalate, via the formation of 2-isopropylmaleate. This chain is 3-isopropylmalate dehydratase small subunit, found in Bacillus cereus (strain B4264).